Here is a 551-residue protein sequence, read N- to C-terminus: Putative ABC transporter ATP-binding protein BA_3364/GBAA_3364/BAS3118 (551 aa).

ABC transporter domains are found at residues 5–243 (AEIK…FRPF) and 293–525 (LSAE…SINR). Residues 39-46 (GGSGSGKT) and 327-334 (GKNGTGKS) each bind ATP.

It belongs to the ABC transporter superfamily.

The protein resides in the cell membrane. In terms of biological role, probably part of an ABC transporter complex. Responsible for energy coupling to the transport system. This is Putative ABC transporter ATP-binding protein BA_3364/GBAA_3364/BAS3118 from Bacillus anthracis.